The primary structure comprises 3135 residues: Gametocyte surface protein P230 (3135 aa).

The first 20 residues, 1 to 20, serve as a signal peptide directing secretion; the sequence is MKKIITLKNLFLIILVYIFS. N-linked (GlcNAc...) asparagine glycans are attached at residues Asn-76, Asn-111, Asn-135, and Asn-239. Residues 266 to 470 are disordered; the sequence is EEDMSPRDNF…EEKDEGGESF (205 aa). Composition is skewed to acidic residues over residues 276 to 321 and 329 to 345; these read VIDD…EEQL and VGAE…DEDS. Over residues 346 to 358 the composition is skewed to basic and acidic residues; sequence VEARDGDMIRVDE. 2 stretches are compositionally biased toward acidic residues: residues 376–444 and 458–467; these read DVDE…EGEY and GDEEEKDEGG. An N-linked (GlcNAc...) asparagine glycan is attached at Asn-585. 6-Cys domains lie at 589 to 730 and 733 to 887; these read KEYV…VEPY and KING…INEE. Cystine bridges form between Cys-593–Cys-611, Cys-626–Cys-706, Cys-737–Cys-781, and Cys-804–Cys-862. Residues Asn-821, Asn-829, Asn-889, Asn-961, Asn-1079, Asn-1089, and Asn-1153 are each glycosylated (N-linked (GlcNAc...) asparagine). 6-Cys domains follow at residues 918 to 1133, 1136 to 1275, 1285 to 1432, and 1435 to 1560; these read HDYT…ISKQ, KIKG…LKRE, KIYK…VSKR, and KVKG…YKKL. Disulfide bonds link Cys-1140–Cys-1161, Cys-1175–Cys-1251, and Cys-1200–Cys-1249. 7 N-linked (GlcNAc...) asparagine glycosylation sites follow: Asn-1267, Asn-1300, Asn-1452, Asn-1492, Asn-1508, Asn-1621, and Asn-1624. 3 cysteine pairs are disulfide-bonded: Cys-1439–Cys-1459, Cys-1473–Cys-1534, and Cys-1483–Cys-1532. 6-Cys domains lie at 1694-1907, 1910-2035, 2052-2199, and 2204-2374; these read NRHV…ISNS, KING…LNKD, NVHL…VRKN, and SFKL…SDNR. Intrachain disulfides connect Cys-1698–Cys-1726 and Cys-1740–Cys-1881. Asn-1753, Asn-1804, Asn-1882, Asn-1920, Asn-1954, and Asn-1972 each carry an N-linked (GlcNAc...) asparagine glycan. Cystine bridges form between Cys-1914–Cys-1938, Cys-1952–Cys-2017, Cys-1963–Cys-2015, and Cys-2056–Cys-2074. 2 N-linked (GlcNAc...) asparagine glycosylation sites follow: Asn-2178 and Asn-2199. Disulfide bonds link Cys-2208-Cys-2229, Cys-2243-Cys-2356, and Cys-2254-Cys-2354. N-linked (GlcNAc...) asparagine glycosylation is found at Asn-2312 and Asn-2351. Residues 2410-2432 are disordered; it reads IKQQQEEEQQEQILKDQDDRLSR. Positions 2422–2432 are enriched in basic and acidic residues; sequence ILKDQDDRLSR. Residues Asn-2439, Asn-2457, Asn-2466, Asn-2504, Asn-2586, Asn-2611, Asn-2650, Asn-2677, and Asn-2688 are each glycosylated (N-linked (GlcNAc...) asparagine). 4 consecutive 6-Cys domains span residues 2448-2663, 2666-2827, 2831-2979, and 2982-3113; these read NEHI…ISSN, IIHG…IDEK, GKDI…INQG, and EIHG…PEPQ. 2 disulfide bridges follow: Cys-2452–Cys-2476 and Cys-2490–Cys-2638. Disulfide bonds link Cys-2670-Cys-2706, Cys-2720-Cys-2804, and Cys-2730-Cys-2802. The N-linked (GlcNAc...) asparagine glycan is linked to Asn-2952. Cys-2986 and Cys-3010 are disulfide-bonded. 5 N-linked (GlcNAc...) asparagine glycosylation sites follow: Asn-3011, Asn-3016, Asn-3066, Asn-3093, and Asn-3096. 2 disulfide bridges follow: Cys-3024–Cys-3090 and Cys-3035–Cys-3088.

As to quaternary structure, heterodimer; heterodimerizes with PF45/48. May be processed into a 310 kDa form as the parasite emerges from the host erythrocytes.

The protein resides in the cell surface. It localises to the cell membrane. Functionally, gametocyte surface protein required for male/female gamete fusion. Also required for male gamete exflagellation and interaction with host erythrocytes. The protein is Gametocyte surface protein P230 (PFS230) of Plasmodium falciparum (isolate 3D7).